The chain runs to 978 residues: NACHT, LRR and PYD domains-containing protein 4E (978 aa).

Residues 1–93 (MASFFSDFGL…MERAGREIAG (93 aa)) enclose the Pyrin domain. Positions 148–471 (HMVFLQGVAG…FHLLKSHVDH (324 aa)) constitute an NACHT domain. 154–161 (GVAGIGKS) provides a ligand contact to ATP. 6 LRR repeats span residues 594–617 (CSTL…HSYT), 694–717 (LLNL…LNQA), 746–773 (SKML…LCHP), 802–825 (NKTL…VLCG), 859–882 (NQNL…LLCD), and 916–940 (CKTL…LFEA).

Belongs to the NLRP family.

Its function is as follows. May be involved in inflammation and recognition of cytosolic pathogen-associated molecular patterns (PAMPs) not intercepted by membrane-bound receptors. In Mus musculus (Mouse), this protein is NACHT, LRR and PYD domains-containing protein 4E (Nlrp4e).